We begin with the raw amino-acid sequence, 461 residues long: Bifunctional protein GlmU (461 aa).

The segment at 1 to 229 (MEKYVVVLAA…FSESLGVNDR (229 aa)) is pyrophosphorylase. UDP-N-acetyl-alpha-D-glucosamine is bound by residues 8–11 (LAAG), Lys-22, Gln-72, and 77–78 (GT). Asp-102 is a Mg(2+) binding site. Residues Gly-139, Glu-154, Asn-169, and Asn-227 each contribute to the UDP-N-acetyl-alpha-D-glucosamine site. Asn-227 contacts Mg(2+). The linker stretch occupies residues 230-250 (IALAEATRIMQRRINEGHMRD). Residues 251–461 (GVTFIDPATA…LPLSEDEEWK (211 aa)) are N-acetyltransferase. UDP-N-acetyl-alpha-D-glucosamine-binding residues include Arg-332 and Lys-350. Residue His-362 is the Proton acceptor of the active site. 2 residues coordinate UDP-N-acetyl-alpha-D-glucosamine: Tyr-365 and Asn-376. Acetyl-CoA contacts are provided by Ala-422 and Arg-439.

In the N-terminal section; belongs to the N-acetylglucosamine-1-phosphate uridyltransferase family. The protein in the C-terminal section; belongs to the transferase hexapeptide repeat family. As to quaternary structure, homotrimer. Requires Mg(2+) as cofactor.

It is found in the cytoplasm. The catalysed reaction is alpha-D-glucosamine 1-phosphate + acetyl-CoA = N-acetyl-alpha-D-glucosamine 1-phosphate + CoA + H(+). The enzyme catalyses N-acetyl-alpha-D-glucosamine 1-phosphate + UTP + H(+) = UDP-N-acetyl-alpha-D-glucosamine + diphosphate. Its pathway is nucleotide-sugar biosynthesis; UDP-N-acetyl-alpha-D-glucosamine biosynthesis; N-acetyl-alpha-D-glucosamine 1-phosphate from alpha-D-glucosamine 6-phosphate (route II): step 2/2. The protein operates within nucleotide-sugar biosynthesis; UDP-N-acetyl-alpha-D-glucosamine biosynthesis; UDP-N-acetyl-alpha-D-glucosamine from N-acetyl-alpha-D-glucosamine 1-phosphate: step 1/1. It functions in the pathway bacterial outer membrane biogenesis; LPS lipid A biosynthesis. In terms of biological role, catalyzes the last two sequential reactions in the de novo biosynthetic pathway for UDP-N-acetylglucosamine (UDP-GlcNAc). The C-terminal domain catalyzes the transfer of acetyl group from acetyl coenzyme A to glucosamine-1-phosphate (GlcN-1-P) to produce N-acetylglucosamine-1-phosphate (GlcNAc-1-P), which is converted into UDP-GlcNAc by the transfer of uridine 5-monophosphate (from uridine 5-triphosphate), a reaction catalyzed by the N-terminal domain. This is Bifunctional protein GlmU from Lactobacillus delbrueckii subsp. bulgaricus (strain ATCC BAA-365 / Lb-18).